A 216-amino-acid polypeptide reads, in one-letter code: Protein Syd (216 aa).

This sequence belongs to the Syd family.

It localises to the cell inner membrane. Its function is as follows. Interacts with the SecY protein in vivo. May bind preferentially to an uncomplexed state of SecY, thus functioning either as a chelating agent for excess SecY in the cell or as a regulatory factor that negatively controls the translocase function. This is Protein Syd from Shewanella putrefaciens (strain CN-32 / ATCC BAA-453).